We begin with the raw amino-acid sequence, 66 residues long: Small vasohibin-binding protein (66 aa).

A compositionally biased stretch (basic and acidic residues) spans methionine 1 to lysine 23. Residues methionine 1–leucine 31 form a disordered region. Residues alanine 5–glutamine 52 are a coiled coil.

This sequence belongs to the SVBP family. As to quaternary structure, interacts with VASH1 and VASH2.

Its subcellular location is the cytoplasm. The protein localises to the secreted. It localises to the cytoskeleton. Its function is as follows. Enhances the tyrosine carboxypeptidase activity of VASH1 and VASH2, thereby promoting the removal of the C-terminal tyrosine residue of alpha-tubulin. This activity is critical for spindle function and accurate chromosome segregation during mitosis since microtubule detyronisation regulates mitotic spindle length and postioning. Also required to enhance the solubility and secretion of VASH1 and VASH2. Plays a role in axon and excitatory synapse formation. The polypeptide is Small vasohibin-binding protein (Homo sapiens (Human)).